We begin with the raw amino-acid sequence, 499 residues long: Glucose-6-phosphate exchanger SLC37A2 (499 aa).

A helical transmembrane segment spans residues 21 to 40 (YRGFIIVMTFLFYTCYHLSR). Residues N53, N62, and N66 are each glycosylated (N-linked (GlcNAc...) asparagine). Helical transmembrane passes span 86–106 (GSLDTAFLVSYAIGMFFSGIF), 116–136 (LSGGMIISGIFTSFMGFGYYW), 143–163 (YYILFQILNGLAQTTGWPAVV), 187–207 (AVGNILGSLIAGAFVSTAWGL), 208–228 (SFIVPGIIIAAFGIFCFFFLV), 302–322 (LCLLFAKLVSYTFLYWLPLYI), 334–354 (GDLSTLFDVGGIIGGILAGGI), 362–382 (AITCTIMLILTAPMLFIYNYF), 391–411 (IAMLIICGILVNGPYSLITTA), 434–454 (AIIDGSGSIGAALGPSLAGVL), and 458–478 (GWNYVFYMLIAADICACLLLA).

The protein belongs to the major facilitator superfamily. Organophosphate:Pi antiporter (OPA) (TC 2.A.1.4) family.

The protein resides in the endoplasmic reticulum membrane. It carries out the reaction D-glucose 6-phosphate(in) + phosphate(out) = D-glucose 6-phosphate(out) + phosphate(in). Functionally, inorganic phosphate and glucose-6-phosphate antiporter. May transport cytoplasmic glucose-6-phosphate into the lumen of the endoplasmic reticulum and translocate inorganic phosphate into the opposite direction. In Xenopus laevis (African clawed frog), this protein is Glucose-6-phosphate exchanger SLC37A2.